Reading from the N-terminus, the 446-residue chain is WEB family protein At3g56270 (446 aa).

Residues 313–349 are a coiled coil; it reads TNVSRIEILRKLEEANEEVKQSKQALEVALNRVEIAS.

The protein belongs to the WEB family.

This chain is WEB family protein At3g56270, found in Arabidopsis thaliana (Mouse-ear cress).